Here is a 204-residue protein sequence, read N- to C-terminus: Holliday junction branch migration complex subunit RuvA (204 aa).

Residues 1 to 63 (MIGWLQGRVL…EDGQFLYGFS (63 aa)) form a domain I region. The tract at residues 64-142 (SFLQRQLFRE…KNDLFLCDES (79 aa)) is domain II. A flexible linker region spans residues 143–152 (ESSRAPIALS). The segment at 152–204 (SASEEAIQALIALELAPAEAELWVKKAQKTLAEDADSAALIKTAFALRLQGAK) is domain III.

Belongs to the RuvA family. Homotetramer. Forms an RuvA(8)-RuvB(12)-Holliday junction (HJ) complex. HJ DNA is sandwiched between 2 RuvA tetramers; dsDNA enters through RuvA and exits via RuvB. An RuvB hexamer assembles on each DNA strand where it exits the tetramer. Each RuvB hexamer is contacted by two RuvA subunits (via domain III) on 2 adjacent RuvB subunits; this complex drives branch migration. In the full resolvosome a probable DNA-RuvA(4)-RuvB(12)-RuvC(2) complex forms which resolves the HJ.

The protein resides in the cytoplasm. Functionally, the RuvA-RuvB-RuvC complex processes Holliday junction (HJ) DNA during genetic recombination and DNA repair, while the RuvA-RuvB complex plays an important role in the rescue of blocked DNA replication forks via replication fork reversal (RFR). RuvA specifically binds to HJ cruciform DNA, conferring on it an open structure. The RuvB hexamer acts as an ATP-dependent pump, pulling dsDNA into and through the RuvAB complex. HJ branch migration allows RuvC to scan DNA until it finds its consensus sequence, where it cleaves and resolves the cruciform DNA. The chain is Holliday junction branch migration complex subunit RuvA from Dichelobacter nodosus (strain VCS1703A).